Here is a 318-residue protein sequence, read N- to C-terminus: Cobalamin biosynthesis protein CobD (318 aa).

A run of 5 helical transmembrane segments spans residues 51–71 (VGGVLLLLLAVGITAGAAWGA), 77–97 (LVHPLAGVVVSALLGWTCLAA), 153–173 (DGVIAPLLFFMIGGAPLALAY), 206–226 (LIPARLTGLLMTLAAPLAGLS), and 296–316 (MYGAECLLVLLAAVMTTILTI).

Belongs to the CobD/CbiB family.

Its subcellular location is the cell membrane. It participates in cofactor biosynthesis; adenosylcobalamin biosynthesis. Converts cobyric acid to cobinamide by the addition of aminopropanol on the F carboxylic group. This Geobacter metallireducens (strain ATCC 53774 / DSM 7210 / GS-15) protein is Cobalamin biosynthesis protein CobD.